Reading from the N-terminus, the 103-residue chain is Large ribosomal subunit protein eL14 (103 aa).

This sequence belongs to the eukaryotic ribosomal protein eL14 family.

This chain is Large ribosomal subunit protein eL14, found in Pyrobaculum aerophilum (strain ATCC 51768 / DSM 7523 / JCM 9630 / CIP 104966 / NBRC 100827 / IM2).